Reading from the N-terminus, the 313-residue chain is Olfactory receptor 4Q3 (313 aa).

Residues 1 to 25 (MKKEQDSNVTEFVLLGLSSSWELQL) lie on the Extracellular side of the membrane. Residue Asn-8 is glycosylated (N-linked (GlcNAc...) asparagine). Residues 26-49 (FLFLLFLFFYIAIVLGNLLIVVTV) form a helical membrane-spanning segment. Residues 50-58 (QAHAHLLQS) are Cytoplasmic-facing. A helical transmembrane segment spans residues 59 to 80 (PMYYFLGHLSFIDLCLSCVTVP). Over 81-101 (KMLGDFLQQGKSISFSGCLAQ) the chain is Extracellular. Residues Cys-98 and Cys-190 are joined by a disulfide bond. A helical membrane pass occupies residues 102–121 (IYFLHFLGASEMFLLTVMAY). Residues 122 to 140 (DRYVAICNPLRYLTVMNPQ) lie on the Cytoplasmic side of the membrane. The helical transmembrane segment at 141–159 (LCLWLVLACWCGGFIHSIM) threads the bilayer. The Extracellular segment spans residues 160–196 (QVILVIQLPFCGPNELDNFYCDVPQVIKLACMDTYVV). Residues 197–220 (EVLVIANSGLLSLVCFLVLLFSYA) traverse the membrane as a helical segment. Residues 221 to 236 (IILITLRTHFCQGQNK) are Cytoplasmic-facing. A helical membrane pass occupies residues 237-259 (VFSTCASHLTVVSLIFVPCVFIY). The Extracellular segment spans residues 260-270 (LRPFCSFSVDK). A helical membrane pass occupies residues 271-290 (IFSLFYTVITPMLNPLIYTL). Residues 291–313 (RNTDMKTAMKKLRIKPCGIPLPC) lie on the Cytoplasmic side of the membrane.

Belongs to the G-protein coupled receptor 1 family.

It is found in the cell membrane. Odorant receptor. The protein is Olfactory receptor 4Q3 (OR4Q3) of Homo sapiens (Human).